A 228-amino-acid chain; its full sequence is Ribosomal RNA small subunit methyltransferase G (228 aa).

S-adenosyl-L-methionine-binding positions include glycine 89, leucine 94, 140–141 (VE), and arginine 159.

This sequence belongs to the methyltransferase superfamily. RNA methyltransferase RsmG family.

The protein resides in the cytoplasm. The enzyme catalyses guanosine(527) in 16S rRNA + S-adenosyl-L-methionine = N(7)-methylguanosine(527) in 16S rRNA + S-adenosyl-L-homocysteine. In terms of biological role, specifically methylates the N7 position of guanine in position 527 of 16S rRNA. In Burkholderia vietnamiensis (strain G4 / LMG 22486) (Burkholderia cepacia (strain R1808)), this protein is Ribosomal RNA small subunit methyltransferase G.